We begin with the raw amino-acid sequence, 855 residues long: Axonemal dynein light chain domain-containing protein 1 (855 aa).

Residues 1–17 (MSLPKTPSTPLNSASTS) are compositionally biased toward polar residues. A disordered region spans residues 1-31 (MSLPKTPSTPLNSASTSESKKLVSVATEGTR). 3 coiled-coil regions span residues 316 to 402 (QRIL…WSSA), 451 to 480 (LQKL…RETL), and 571 to 596 (SERQ…RING).

It is found in the cytoplasm. May be essential for spermiogenesis and male fertility probably by regulating the manchette dynamics, spermatid head shaping and sperm flagellum assembly. The chain is Axonemal dynein light chain domain-containing protein 1 (AXDND1) from Macaca fascicularis (Crab-eating macaque).